The primary structure comprises 1470 residues: Niemann-Pick type C1-related protein (1470 aa).

Residues 1–3 are Cytoplasmic-facing; it reads MFV. An intramembrane segment occupies 4 to 34; sequence KNFIHKLKELKQKSLDKFANLLYDYGGYVYD. Position 35 (Arg-35) is a topological domain, cytoplasmic. The chain crosses the membrane as a helical span at residues 36 to 56; sequence PCTFIICSLICCLLLTCGFYF. Topologically, residues 57–493 are extracellular; sequence KEHEKDIYKL…DEVDRISKID (437 aa). N-linked (GlcNAc...) asparagine glycans are attached at residues Asn-78, Asn-165, Asn-294, and Asn-361. Residues 494-514 traverse the membrane as a helical segment; it reads NLTRLLLLIGVLLIFMYALFN. One can recognise an SSD domain in the interval 494–653; sequence NLTRLLLLIG…LTFLLSFLCI (160 aa). Residues 515 to 524 lie on the Cytoplasmic side of the membrane; that stretch reads NVTSVLYRSK. A helical membrane pass occupies residues 525–549; sequence PLCAVMGIFCGFLGFLSGSGFLYFL. The Extracellular portion of the chain corresponds to 550-554; sequence GVKSV. A helical transmembrane segment spans residues 555 to 582; it reads PPAETVPFLVIGVGVDDVFVILNSYSLL. Residues 583-587 lie on the Cytoplasmic side of the membrane; sequence FMVKD. A helical transmembrane segment spans residues 588-619; it reads NKKRIQMCLKDSALAITVTTLTNIIAFLISAI. Topologically, residues 620 to 622 are extracellular; it reads SPF. Residues 623–659 traverse the membrane as a helical segment; sequence YSICAFSLFTASSLFFGYLMVLTFLLSFLCIEAKLEK. At 660–663 the chain is on the cytoplasmic side; sequence KKRN. The stretch at 664–673 is an intramembrane region; that stretch reads IFTGTFHLFR. The Cytoplasmic portion of the chain corresponds to 674–1057; it reads SIFMKSSKKN…IYEEPKGNIG (384 aa). The stretch at 1058–1073 is an intramembrane region; the sequence is KYFRSLVKNYYVPFLS. A topological domain (cytoplasmic) is located at residue Ser-1074. A helical membrane pass occupies residues 1075–1098; that stretch reads RFGKTIVYIMFTIIIAMSIYGCTL. The Extracellular portion of the chain corresponds to 1099-1300; the sequence is MKKGIKYDKA…NHNVQMVCFH (202 aa). An N-linked (GlcNAc...) asparagine glycan is attached at Asn-1218. The chain crosses the membrane as a helical span at residues 1301–1334; it reads LSSIFNETDESIIEVTLINLGITILTILVVTAYI. The Cytoplasmic portion of the chain corresponds to 1335 to 1337; sequence IKG. The chain crosses the membrane as a helical span at residues 1338–1361; the sequence is FYSCVIIALIIFLIDLCIFGFMCL. Residues 1362 to 1367 are Extracellular-facing; sequence CGITMN. The chain crosses the membrane as a helical span at residues 1368 to 1394; sequence IISMVILVLSVGFSIDHTSHIVQAFSH. At 1395-1399 the chain is on the cytoplasmic side; sequence SMGRT. Residues 1400-1431 traverse the membrane as a helical segment; that stretch reads RDEKMKESLHLMIGPVLHSGLSTWFVISTLFF. Over 1432–1434 the chain is Extracellular; the sequence is SNK. Residues 1435–1466 traverse the membrane as a helical segment; that stretch reads DFTVIFFQTLSLVLFFSITFSSMFLPVLLSSF. At 1467 to 1470 the chain is on the cytoplasmic side; it reads GPLH.

Belongs to the patched family.

The protein resides in the cell membrane. It catalyses the reaction cholesterol(in) = cholesterol(out). In terms of biological role, facilitates cholesterol efflux from membranes in a pH-dependent manner. Required for maintaining normal parasite plasma membrane lipid composition. Required for the proper functioning of digestive vacuole. Required for the viability of blood-stage parasites. This Plasmodium falciparum (isolate 3D7) protein is Niemann-Pick type C1-related protein.